We begin with the raw amino-acid sequence, 88 residues long: MYKQIVHAIGKAIQTLLLGLIKSYRYLISPVLMSSCRFYPSCSCYAETALKRFGVIKGSGLTVWRLLRCHPFHPGGVDFVPEKSNEMV.

This sequence belongs to the UPF0161 family.

Its subcellular location is the cell inner membrane. Functionally, could be involved in insertion of integral membrane proteins into the membrane. This is Putative membrane protein insertion efficiency factor from Coxiella burnetii (strain Dugway 5J108-111).